A 123-amino-acid polypeptide reads, in one-letter code: Ribosome-binding factor A (123 aa).

The protein belongs to the RbfA family. In terms of assembly, monomer. Binds 30S ribosomal subunits, but not 50S ribosomal subunits or 70S ribosomes.

It localises to the cytoplasm. One of several proteins that assist in the late maturation steps of the functional core of the 30S ribosomal subunit. Associates with free 30S ribosomal subunits (but not with 30S subunits that are part of 70S ribosomes or polysomes). Required for efficient processing of 16S rRNA. May interact with the 5'-terminal helix region of 16S rRNA. This Dechloromonas aromatica (strain RCB) protein is Ribosome-binding factor A.